A 744-amino-acid polypeptide reads, in one-letter code: Polyribonucleotide nucleotidyltransferase (744 aa).

D515 and D521 together coordinate Mg(2+). A KH domain is found at P581–I640. An S1 motif domain is found at G652 to V724.

This sequence belongs to the polyribonucleotide nucleotidyltransferase family. It depends on Mg(2+) as a cofactor.

The protein localises to the cytoplasm. The enzyme catalyses RNA(n+1) + phosphate = RNA(n) + a ribonucleoside 5'-diphosphate. Its function is as follows. Involved in mRNA degradation. Catalyzes the phosphorolysis of single-stranded polyribonucleotides processively in the 3'- to 5'-direction. The chain is Polyribonucleotide nucleotidyltransferase from Beutenbergia cavernae (strain ATCC BAA-8 / DSM 12333 / CCUG 43141 / JCM 11478 / NBRC 16432 / NCIMB 13614 / HKI 0122).